A 299-amino-acid chain; its full sequence is Inosose dehydratase (299 aa).

Belongs to the IolE/MocC family. Requires glutathione as cofactor. It depends on Co(2+) as a cofactor. Mn(2+) is required as a cofactor.

It catalyses the reaction scyllo-inosose = 3D-3,5/4-trihydroxycyclohexane-1,2-dione + H2O. Its function is as follows. Catalyzes the dehydration of inosose (2-keto-myo-inositol, 2KMI or 2,4,6/3,5-pentahydroxycyclohexanone) to 3D-(3,5/4)-trihydroxycyclohexane-1,2-dione (D-2,3-diketo-4-deoxy-epi-inositol). The chain is Inosose dehydratase from Klebsiella pneumoniae subsp. pneumoniae (strain ATCC 700721 / MGH 78578).